The following is a 468-amino-acid chain: 6-phosphogluconate dehydrogenase, decarboxylating (468 aa).

Residues 10–15, 33–35, 74–76, and Asn-102 each bind NADP(+); these read GMAVMG, NRS, and VKA. Substrate is bound by residues Asn-102 and 128–130; that span reads SGG. The active-site Proton acceptor is the Lys-183. A substrate-binding site is contributed by 186-187; the sequence is HN. Residue Glu-190 is the Proton donor of the active site. Substrate-binding residues include Tyr-191, Lys-260, Arg-287, Arg-445, and His-451.

The protein belongs to the 6-phosphogluconate dehydrogenase family. As to quaternary structure, homodimer.

The enzyme catalyses 6-phospho-D-gluconate + NADP(+) = D-ribulose 5-phosphate + CO2 + NADPH. Its pathway is carbohydrate degradation; pentose phosphate pathway; D-ribulose 5-phosphate from D-glucose 6-phosphate (oxidative stage): step 3/3. Catalyzes the oxidative decarboxylation of 6-phosphogluconate to ribulose 5-phosphate and CO(2), with concomitant reduction of NADP to NADPH. This is 6-phosphogluconate dehydrogenase, decarboxylating (gnd) from Shigella flexneri.